Consider the following 370-residue polypeptide: Probable pectin lyase E (370 aa).

An intrachain disulfide couples cysteine 75 to cysteine 96. The active site involves arginine 245. N-linked (GlcNAc...) asparagine glycosylation is present at asparagine 307. Cysteines 311 and 319 form a disulfide.

The protein belongs to the polysaccharide lyase 1 family.

It localises to the secreted. It catalyses the reaction Eliminative cleavage of (1-&gt;4)-alpha-D-galacturonan methyl ester to give oligosaccharides with 4-deoxy-6-O-methyl-alpha-D-galact-4-enuronosyl groups at their non-reducing ends.. In terms of biological role, pectinolytic enzymes consist of four classes of enzymes: pectin lyase, polygalacturonase, pectin methylesterase and rhamnogalacturonase. Among pectinolytic enzymes, pectin lyase is the most important in depolymerization of pectin, since it cleaves internal glycosidic bonds of highly methylated pectins. The protein is Probable pectin lyase E (pelE) of Aspergillus niger.